The chain runs to 238 residues: Ribosomal RNA large subunit methyltransferase E (238 aa).

S-adenosyl-L-methionine is bound by residues Gly-76, Trp-78, Asp-99, Asp-115, and Asp-139. Lys-179 acts as the Proton acceptor in catalysis.

It belongs to the class I-like SAM-binding methyltransferase superfamily. RNA methyltransferase RlmE family.

The protein localises to the cytoplasm. The enzyme catalyses uridine(2552) in 23S rRNA + S-adenosyl-L-methionine = 2'-O-methyluridine(2552) in 23S rRNA + S-adenosyl-L-homocysteine + H(+). Functionally, specifically methylates the uridine in position 2552 of 23S rRNA at the 2'-O position of the ribose in the fully assembled 50S ribosomal subunit. The protein is Ribosomal RNA large subunit methyltransferase E of Rhodopseudomonas palustris (strain BisB18).